We begin with the raw amino-acid sequence, 69 residues long: uncharacterized protein (69 aa).

The HTH cro/C1-type domain occupies 5–60 (IREHRKELGLTQEELAERVGVTRQTIIALEKGRYSPSLILAHRIARALGREHIEDI). Positions 16 to 35 (QEELAERVGVTRQTIIALEK) form a DNA-binding region, H-T-H motif.

This is an uncharacterized protein from Methanothermobacter thermautotrophicus (strain ATCC 29096 / DSM 1053 / JCM 10044 / NBRC 100330 / Delta H) (Methanobacterium thermoautotrophicum).